Reading from the N-terminus, the 276-residue chain is Energy-coupling factor transporter ATP-binding protein EcfA1 (276 aa).

Positions 2-237 constitute an ABC transporter domain; that stretch reads IEIKNLKFKY…GSELVDLGLD (236 aa). ATP is bound at residue 37–44; the sequence is GHNGSGKS.

It belongs to the ABC transporter superfamily. Energy-coupling factor EcfA family. As to quaternary structure, forms a stable energy-coupling factor (ECF) transporter complex composed of 2 membrane-embedded substrate-binding proteins (S component), 2 ATP-binding proteins (A component) and 2 transmembrane proteins (T component).

It localises to the cell membrane. Functionally, ATP-binding (A) component of a common energy-coupling factor (ECF) ABC-transporter complex. Unlike classic ABC transporters this ECF transporter provides the energy necessary to transport a number of different substrates. This is Energy-coupling factor transporter ATP-binding protein EcfA1 from Streptococcus thermophilus (strain CNRZ 1066).